The chain runs to 146 residues: UPF0735 ACT domain-containing protein Teth514_2312 (146 aa).

Residues 71–146 (TLSMVLDHMP…GVRKIEILGE (76 aa)) enclose the ACT domain.

Belongs to the UPF0735 family.

The protein is UPF0735 ACT domain-containing protein Teth514_2312 of Thermoanaerobacter sp. (strain X514).